The chain runs to 800 residues: Phosphoinositide 3-kinase adapter protein 1 (800 aa).

Residues 8-145 (GGYDVLILYA…AVKKAISEDS (138 aa)) enclose the TIR domain. The interval 10-144 (YDVLILYASD…EAVKKAISED (135 aa)) is necessary and sufficient to mediate inhibition of NF-kappa-B downstream of activated TLRs. One can recognise a DBB domain in the interval 185–321 (VQPDHIRCGV…NIPASGLHLF (137 aa)). Y266 carries the post-translational modification Phosphotyrosine. 3 positions are modified to phosphotyrosine; by SYK: Y423, Y448, and Y463. A disordered region spans residues 527 to 548 (EMASRPPVPVPRPESSSPQPDN). Positions 643–663 (QQENLKRLRDSITRRQMEKQK) form a coiled coil. The span at 702–713 (PKKELKRGDWKT) shows a compositional bias: basic and acidic residues. A disordered region spans residues 702–800 (PKKELKRGDW…YPPPVPPRGR (99 aa)). Positions 714-737 (ESTSSTTSSASNRSSTRSILSVSS) are enriched in low complexity. Polar residues predominate over residues 749 to 759 (SEASRSRSPIP). Composition is skewed to pro residues over residues 767–777 (LPLPERPPRVP) and 791–800 (YPPPVPPRGR).

Homooligomer. Interacts (phosphorylated on tyrosine residues within YXXM motifs) with PIK3R1 (via SH2 domain); required for BCR- and TLR-mediated activation of phosphoinositide 3-kinase. Constitutively phosphorylated. Phosphorylated on tyrosine residues within the YXXM motifs by BTK and SYK. Isoform 1 and isoform 2 are phosphorylated on tyrosine residues, most likely within the YXXM motifs, via CD19 activation.

It localises to the cytoplasm. The protein resides in the cell membrane. Functionally, signaling adapter that contributes to B-cell development by linking B-cell receptor (BCR) signaling to the phosphoinositide 3-kinase (PI3K)-Akt signaling pathway. Has a complementary role to the BCR coreceptor CD19, coupling BCR and PI3K activation by providing a docking site for the PI3K subunit PIK3R1. Alternatively, links Toll-like receptor (TLR) signaling to PI3K activation, a process preventing excessive inflammatory cytokine production. Also involved in the activation of PI3K in natural killer cells. May be involved in the survival of mature B-cells via activation of REL. The polypeptide is Phosphoinositide 3-kinase adapter protein 1 (PIK3AP1) (Gallus gallus (Chicken)).